The following is a 125-amino-acid chain: Photoactive yellow protein (125 aa).

Residues 23–86 form the PAS domain; the sequence is LDGLAFGAIQ…GKFKEGVASG (64 aa). Cysteine 69 carries the S-(4-hydroxycinnamyl)cysteine modification.

The protein belongs to the photoactive yellow protein family. As to quaternary structure, monomer. Post-translationally, the 4-hydroxycinnamic acid (p-coumaric acid) chromophore is covalently bound via a thioester linkage.

In terms of biological role, photoactive blue light protein. Probably functions as a photoreceptor for a negative phototaxis response. The sequence is that of Photoactive yellow protein (pyp) from Halorhodospira halophila (Ectothiorhodospira halophila).